We begin with the raw amino-acid sequence, 191 residues long: Thymidylate kinase (191 aa).

7–14 (GIDTCGKS) is an ATP binding site.

This sequence belongs to the thymidylate kinase family.

The enzyme catalyses dTMP + ATP = dTDP + ADP. Its function is as follows. Phosphorylation of dTMP to form dTDP in both de novo and salvage pathways of dTTP synthesis. The sequence is that of Thymidylate kinase from Sulfurovum sp. (strain NBC37-1).